The following is a 1240-amino-acid chain: RNA-directed RNA polymerase VP2 (1240 aa).

Residues 516–764 form the RdRp catalytic domain; the sequence is LVANYINKHM…KLYALFGARI (249 aa).

It belongs to the reoviridae RNA-directed RNA polymerase family.

The protein localises to the virion. The catalysed reaction is RNA(n) + a ribonucleoside 5'-triphosphate = RNA(n+1) + diphosphate. In terms of biological role, RNA-directed RNA polymerase that is involved in transcription and genome replication. Following infection, it catalyzes the synthesis of fully conservative plus strands. After core assembly, which consists in recruitment of one capped plus-strand for each genomic segments and polymerase complexes, the polymerase switches mode and catalyzes the synthesis of complementary minus-strands. The polypeptide is RNA-directed RNA polymerase VP2 (S2) (Oncorhynchus keta (Chum salmon)).